The primary structure comprises 298 residues: ATP synthase gamma chain (298 aa).

The protein belongs to the ATPase gamma chain family. F-type ATPases have 2 components, CF(1) - the catalytic core - and CF(0) - the membrane proton channel. CF(1) has five subunits: alpha(3), beta(3), gamma(1), delta(1), epsilon(1). CF(0) has three main subunits: a, b and c.

Its subcellular location is the cell inner membrane. Its function is as follows. Produces ATP from ADP in the presence of a proton gradient across the membrane. The gamma chain is believed to be important in regulating ATPase activity and the flow of protons through the CF(0) complex. The chain is ATP synthase gamma chain from Desulfosudis oleivorans (strain DSM 6200 / JCM 39069 / Hxd3) (Desulfococcus oleovorans).